Here is a 441-residue protein sequence, read N- to C-terminus: Ribosomal protein uS12 methylthiotransferase RimO (441 aa).

The region spanning 8-118 is the MTTase N-terminal domain; the sequence is PKIGFVSLGC…VLQHVHHYVP (111 aa). C17, C53, C82, C150, C154, and C157 together coordinate [4Fe-4S] cluster. Positions 136 to 373 constitute a Radical SAM core domain; sequence LTPRHYAYLK…MQLQQQISAE (238 aa). A TRAM domain is found at 376 to 441; it reads QEKVGREILV…DEYDLWGSRV (66 aa).

The protein belongs to the methylthiotransferase family. RimO subfamily. [4Fe-4S] cluster is required as a cofactor.

The protein resides in the cytoplasm. The enzyme catalyses L-aspartate(89)-[ribosomal protein uS12]-hydrogen + (sulfur carrier)-SH + AH2 + 2 S-adenosyl-L-methionine = 3-methylsulfanyl-L-aspartate(89)-[ribosomal protein uS12]-hydrogen + (sulfur carrier)-H + 5'-deoxyadenosine + L-methionine + A + S-adenosyl-L-homocysteine + 2 H(+). Functionally, catalyzes the methylthiolation of an aspartic acid residue of ribosomal protein uS12. The chain is Ribosomal protein uS12 methylthiotransferase RimO from Salmonella agona (strain SL483).